A 336-amino-acid polypeptide reads, in one-letter code: Alpha-N-acetylgalactosaminide alpha-2,6-sialyltransferase 5 (336 aa).

Topologically, residues 1 to 8 are cytoplasmic; it reads MKTLMRHG. The chain crosses the membrane as a helical; Signal-anchor for type II membrane protein span at residues 9-29; it reads LAVCLALTTMCTSLLLVYSSL. Over 30–336 the chain is Lumenal; that stretch reads GGQKERPPQQ…INHPENKPVF (307 aa). The segment at 32–81 is disordered; sequence QKERPPQQQQQQQQQQQQASATGSSQPAAESSTQQRPGVPAGPRPLDGYL. Low complexity predominate over residues 38–49; the sequence is QQQQQQQQQQQQ. The span at 50 to 67 shows a compositional bias: polar residues; the sequence is ASATGSSQPAAESSTQQR. Residues cysteine 96 and cysteine 245 are joined by a disulfide bond. N-linked (GlcNAc...) asparagine glycosylation is found at asparagine 137 and asparagine 161.

The protein belongs to the glycosyltransferase 29 family.

The protein resides in the golgi apparatus membrane. The catalysed reaction is a ganglioside GM1b (d18:1(4E)) + CMP-N-acetyl-beta-neuraminate = a ganglioside GD1alpha (d18:1(4E)) + CMP + H(+). It catalyses the reaction N-acetyl-alpha-neuraminosyl-(2-&gt;3)-beta-D-galactosyl-(1-&gt;3)-N-acetyl-beta-D-glucosaminyl-(1-&gt;3)-beta-D-galactosyl-(1-&gt;4)-beta-D-glucosyl-(1&lt;-&gt;1')-N-acyl-sphing-4-enine + CMP-N-acetyl-beta-neuraminate = N-acetyl-alpha-neuraminosyl-(2-&gt;3)-beta-D-galactosyl-(1-&gt;3)-[N-acetyl-alpha-neuraminosyl-(2-&gt;6)]-N-acetyl-beta-D-glucosaminyl-(1-&gt;3)-beta-D-galactosyl-(1-&gt;4)-beta-D-glucosyl-(1&lt;-&gt;1')-N-acyl-sphing-4-enine + CMP + H(+). It functions in the pathway glycolipid biosynthesis. Functionally, predominantly catalyzes the biosynthesis of ganglioside GD1alpha from GM1b in the brain, by transferring the sialyl group (N-acetyl-alpha-neuraminyl or NeuAc) from CMP-NeuAc to the GalNAc residue on the NeuAc-alpha-2,3-Gal-beta-1,3-GalNAc sequence of GM1b. GD1alpha is a critical molecule in the communication and interaction between neuronal cells and their supportive cells, particularly in brain tissues, and functions as an adhesion molecule in the process of metastasis. Also shows activity towards sialyl Lc4Cer (N-acetyl-alpha-neuraminosyl-(2-&gt;3)-beta-D-galactosyl-(1-&gt;3)-N-acetyl-beta-D-glucosaminyl-(1-&gt;3)-beta-D-galactosyl-(1-&gt;4)-beta-D-glucosyl-(1&lt;-&gt;1')-N-acyl-sphing-4-enine) generating disialyl Lc4Cer, which can lead to the synthesis of disialyl Lewis a (Le(a)), suggested to be a cancer-associated antigen. The chain is Alpha-N-acetylgalactosaminide alpha-2,6-sialyltransferase 5 (ST6GALNAC5) from Homo sapiens (Human).